The sequence spans 480 residues: MNQKIMAVIAAGSMLFGGAGVYAGINLLEMDKPQTAAVPATAQADSERDKAMDKIEKAYELISNEYVEKVDREKLLEGAIQGMLSTLNDPYSVYMDKQTAKQFSDSLDSSFEGIGAEVGMEDGKIIIVSPFKKSPAEKAGLKPNDEIISINGESMAGKDLNHAVLKIRGKKGSSVSMKIQRPGTKKQLSFRIKRAEIPLETVFASEKKVQGHSVGYIAISTFSEHTAEDFAKALRELEKKEIEGLVIDVRGNPGGYLQSVEEILKHFVTKDQPYIQIAERNGDKKRYFSTLTHKKAYPVNVITDKGSASASEILAGALKEAGHYDVVGDTSFGKGTVQQAVPMGDGSNIKLTLYKWLTPNGNWIHKKGIEPTIAIKQPDYFSAGPLQLKEPLKVDMNNEDVKHAQVLLKGLSFDPGREDGYFSKDMKKAVMAFQDQNKLNKTGVIDTRTAETLNQQIEKKKSDEKNDLQLQTALKSLFVN.

The N-terminal stretch at 1–23 (MNQKIMAVIAAGSMLFGGAGVYA) is a signal peptide. One can recognise a PDZ domain in the interval 92–182 (SVYMDKQTAK…SSVSMKIQRP (91 aa)). Residues 113–116 (GIGA) are peptide binding. S309 serves as the catalytic Nucleophile. Catalysis depends on charge relay system residues K334 and Q338.

It belongs to the peptidase S41A family. In terms of assembly, homodimer. Post-translationally, is cleaved by SpoIVB in vitro and in vivo but this cleavage does not appear to be necessary for CtpB activation. CtpB can also cleave itself in vivo.

It is found in the forespore intermembrane space. The enzyme catalyses The enzyme shows specific recognition of a C-terminal tripeptide, Xaa-Yaa-Zaa, in which Xaa is preferably Ala or Leu, Yaa is preferably Ala or Tyr, and Zaa is preferably Ala, but then cleaves at a variable distance from the C-terminus. A typical cleavage is -Ala-Ala-|-Arg-Ala-Ala-Lys-Glu-Asn-Tyr-Ala-Leu-Ala-Ala.. With respect to regulation, activated by peptide binding to the PDZ domain. Involved in the signal transduction pathway leading to the proteolytic activation of the mother cell transcription factor pro-sigma-K during sporulation. The signaling serine protease CtpB triggers pro-sigma-K processing by cleaving the pre-processed regulatory protein SpoIVFA and is necessary for the proper timing of sigma-K activation. In Bacillus subtilis (strain 168), this protein is Carboxy-terminal processing protease CtpB (ctpB).